Here is a 410-residue protein sequence, read N- to C-terminus: UDP-N-acetylglucosamine--N-acetylmuramyl-(pentapeptide) pyrophosphoryl-undecaprenol N-acetylglucosamine transferase (410 aa).

A disordered region spans residues 1 to 35 (MKDTVSQPAGGRGATAPRPADAASPSCGSSPSADS). Residues 14–35 (ATAPRPADAASPSCGSSPSADS) show a composition bias toward low complexity. Residues 45-47 (TAG), N167, R204, S238, and Q334 contribute to the UDP-N-acetyl-alpha-D-glucosamine site.

This sequence belongs to the glycosyltransferase 28 family. MurG subfamily.

It localises to the cell membrane. It carries out the reaction di-trans,octa-cis-undecaprenyl diphospho-N-acetyl-alpha-D-muramoyl-L-alanyl-D-glutamyl-meso-2,6-diaminopimeloyl-D-alanyl-D-alanine + UDP-N-acetyl-alpha-D-glucosamine = di-trans,octa-cis-undecaprenyl diphospho-[N-acetyl-alpha-D-glucosaminyl-(1-&gt;4)]-N-acetyl-alpha-D-muramoyl-L-alanyl-D-glutamyl-meso-2,6-diaminopimeloyl-D-alanyl-D-alanine + UDP + H(+). Its pathway is cell wall biogenesis; peptidoglycan biosynthesis. Its function is as follows. Cell wall formation. Catalyzes the transfer of a GlcNAc subunit on undecaprenyl-pyrophosphoryl-MurNAc-pentapeptide (lipid intermediate I) to form undecaprenyl-pyrophosphoryl-MurNAc-(pentapeptide)GlcNAc (lipid intermediate II). The chain is UDP-N-acetylglucosamine--N-acetylmuramyl-(pentapeptide) pyrophosphoryl-undecaprenol N-acetylglucosamine transferase from Mycobacterium tuberculosis (strain ATCC 25177 / H37Ra).